The following is a 174-amino-acid chain: Protein RESTRICTED TEV MOVEMENT 1 (174 aa).

The region spanning 1–152 (MKIGPVGKHD…LQYIGVYLRP (152 aa)) is the Jacalin-type lectin domain.

The protein belongs to the jacalin lectin family. In terms of assembly, self-interacts. Interacts with RTM3. In terms of tissue distribution, expressed at low levels exclusively in phloem-associated cells (e.g. sieve elements and adjacent cells).

The protein localises to the cytoplasm. Required for the restriction of long-distance movement of the pathogenic tobacco etch virus (TEV) without causing a hypersensitive response or inducing systemic acquired resistance. The sequence is that of Protein RESTRICTED TEV MOVEMENT 1 (RTM1) from Arabidopsis thaliana (Mouse-ear cress).